The sequence spans 157 residues: Protein Smg (157 aa).

This sequence belongs to the Smg family.

This Buchnera aphidicola subsp. Schizaphis graminum (strain Sg) protein is Protein Smg.